The primary structure comprises 351 residues: Mediator of RNA polymerase II transcription subunit 4 (351 aa).

A coiled-coil region spans residues 30–68; sequence QKLAEELLAAEAELSKSLKLLETHQNNNARLQQLRQETS. 2 disordered regions span residues 156–217 and 256–351; these read TQTQ…PAHL and PRGY…DEDD. Residues 163–177 are compositionally biased toward polar residues; that stretch reads NSFNLSFNGTVSTPI. Residues 182–198 are compositionally biased toward low complexity; the sequence is PTPTTTNDTQPSTQLPP. Residues 257-308 show a composition bias toward basic and acidic residues; it reads RGYDPAEQERRRVAEEKARREAEERARLEREEAERKGREERERMAREREAAR. The stretch at 262 to 311 forms a coiled coil; the sequence is AEQERRRVAEEKARREAEERARLEREEAERKGREERERMAREREAARLRN. Residues 340 to 351 are compositionally biased toward acidic residues; that stretch reads ADDDEDDEDEDD.

The protein belongs to the Mediator complex subunit 4 family. Component of the Mediator complex.

Its subcellular location is the nucleus. In terms of biological role, component of the Mediator complex, a coactivator involved in the regulated transcription of nearly all RNA polymerase II-dependent genes. Mediator functions as a bridge to convey information from gene-specific regulatory proteins to the basal RNA polymerase II transcription machinery. Mediator is recruited to promoters by direct interactions with regulatory proteins and serves as a scaffold for the assembly of a functional preinitiation complex with RNA polymerase II and the general transcription factors. The polypeptide is Mediator of RNA polymerase II transcription subunit 4 (MED4) (Chaetomium globosum (strain ATCC 6205 / CBS 148.51 / DSM 1962 / NBRC 6347 / NRRL 1970) (Soil fungus)).